The chain runs to 117 residues: Ribosome-binding factor A (117 aa).

This sequence belongs to the RbfA family. In terms of assembly, monomer. Binds 30S ribosomal subunits, but not 50S ribosomal subunits or 70S ribosomes.

The protein resides in the cytoplasm. One of several proteins that assist in the late maturation steps of the functional core of the 30S ribosomal subunit. Associates with free 30S ribosomal subunits (but not with 30S subunits that are part of 70S ribosomes or polysomes). Required for efficient processing of 16S rRNA. May interact with the 5'-terminal helix region of 16S rRNA. The protein is Ribosome-binding factor A of Nitrosomonas europaea (strain ATCC 19718 / CIP 103999 / KCTC 2705 / NBRC 14298).